The sequence spans 208 residues: Elongation factor Ts, chloroplastic (208 aa).

The protein belongs to the EF-Ts family.

Its subcellular location is the plastid. The protein localises to the chloroplast. Associates with the EF-Tu.GDP complex and induces the exchange of GDP to GTP. It remains bound to the aminoacyl-tRNA.EF-Tu.GTP complex up to the GTP hydrolysis stage on the ribosome. The sequence is that of Elongation factor Ts, chloroplastic (tsf) from Cyanidium caldarium (Red alga).